The chain runs to 392 residues: Formate-dependent phosphoribosylglycinamide formyltransferase (392 aa).

N(1)-(5-phospho-beta-D-ribosyl)glycinamide-binding positions include 22-23 and E82; that span reads EL. Residues R114, K155, 160 to 165, 195 to 198, and E203 contribute to the ATP site; these read SSGHGQ and EGFI. Residues 119 to 307 enclose the ATP-grasp domain; that stretch reads RLAAEELGLK…QFALHARAIL (189 aa). Mg(2+) is bound by residues E266 and E278. Residues D285, K355, and 362–363 each bind N(1)-(5-phospho-beta-D-ribosyl)glycinamide; that span reads RR.

It belongs to the PurK/PurT family. As to quaternary structure, homodimer.

The protein localises to the cell inner membrane. The catalysed reaction is N(1)-(5-phospho-beta-D-ribosyl)glycinamide + formate + ATP = N(2)-formyl-N(1)-(5-phospho-beta-D-ribosyl)glycinamide + ADP + phosphate + H(+). It participates in purine metabolism; IMP biosynthesis via de novo pathway; N(2)-formyl-N(1)-(5-phospho-D-ribosyl)glycinamide from N(1)-(5-phospho-D-ribosyl)glycinamide (formate route): step 1/1. In terms of biological role, involved in the de novo purine biosynthesis. Catalyzes the transfer of formate to 5-phospho-ribosyl-glycinamide (GAR), producing 5-phospho-ribosyl-N-formylglycinamide (FGAR). Formate is provided by PurU via hydrolysis of 10-formyl-tetrahydrofolate. The polypeptide is Formate-dependent phosphoribosylglycinamide formyltransferase (Mannheimia haemolytica (Pasteurella haemolytica)).